We begin with the raw amino-acid sequence, 401 residues long: MQSYLGKLIQHEAAGGVLLVIAAAIAMVLANSPAYDFYNGLLEIPVSIRFGAFEIAKPLLLWVNDGLMAIFFFLVGLEVKREVLGGQLSSVSQITLPAVAAIAGIVFPALIYVWFNIDDPVAVNGWAIPSATDIAFAVGVFTIFGKFLPLSLKLFLLSVAIFDDIGAIVIIALFYSQDLSTTSLIVACAGFVALFLLNRFNVRRQAAYVLIGVVVWAAVLKSGVHATLAGFALAWFIPLKLKNEDGHPMLPHLEHKLHPWVGFVVLPIFAFANAGVSLFGASISDLLNPITLGIAVGLFVGKQLGIFGVCWITVKTGLAKLPDGSTWVQLYGVSLLCGIGFTMSLFIGSLAFEEQGLAYQTSVKAGVLLGSLVSAVLGAVLLARSNAKSKERAEREAARDA.

The next 11 membrane-spanning stretches (helical) occupy residues 13–33, 59–79, 94–114, 125–145, 154–174, 178–198, 209–229, 260–280, 292–312, 332–352, and 363–383; these read AAGG…ANSP, LLLW…GLEV, ITLP…IYVW, GWAI…TIFG, LFLL…IALF, DLST…FLLN, VLIG…ATLA, WVGF…SLFG, LGIA…VCWI, GVSL…SLAF, and VKAG…VLLA.

Belongs to the NhaA Na(+)/H(+) (TC 2.A.33) antiporter family.

The protein resides in the cell inner membrane. The catalysed reaction is Na(+)(in) + 2 H(+)(out) = Na(+)(out) + 2 H(+)(in). Functionally, na(+)/H(+) antiporter that extrudes sodium in exchange for external protons. The polypeptide is Na(+)/H(+) antiporter NhaA 2 (Pseudoalteromonas atlantica (strain T6c / ATCC BAA-1087)).